The chain runs to 424 residues: Serine--tRNA ligase (424 aa).

230 to 232 (TAE) provides a ligand contact to L-serine. 261–263 (RSE) contributes to the ATP binding site. Residue E284 participates in L-serine binding. 348-351 (EISS) contributes to the ATP binding site. S384 serves as a coordination point for L-serine.

This sequence belongs to the class-II aminoacyl-tRNA synthetase family. Type-1 seryl-tRNA synthetase subfamily. In terms of assembly, homodimer. The tRNA molecule binds across the dimer.

The protein resides in the cytoplasm. The catalysed reaction is tRNA(Ser) + L-serine + ATP = L-seryl-tRNA(Ser) + AMP + diphosphate + H(+). The enzyme catalyses tRNA(Sec) + L-serine + ATP = L-seryl-tRNA(Sec) + AMP + diphosphate + H(+). The protein operates within aminoacyl-tRNA biosynthesis; selenocysteinyl-tRNA(Sec) biosynthesis; L-seryl-tRNA(Sec) from L-serine and tRNA(Sec): step 1/1. Its function is as follows. Catalyzes the attachment of serine to tRNA(Ser). Is also able to aminoacylate tRNA(Sec) with serine, to form the misacylated tRNA L-seryl-tRNA(Sec), which will be further converted into selenocysteinyl-tRNA(Sec). This is Serine--tRNA ligase from Desulfatibacillum aliphaticivorans.